Reading from the N-terminus, the 542-residue chain is Chaperonin GroEL 2 (542 aa).

ATP is bound by residues 30–33 (TLGP), K51, 87–91 (DGTTT), G415, and D496.

The protein belongs to the chaperonin (HSP60) family. As to quaternary structure, forms a cylinder of 14 subunits composed of two heptameric rings stacked back-to-back. Interacts with the co-chaperonin GroES.

It localises to the cytoplasm. It carries out the reaction ATP + H2O + a folded polypeptide = ADP + phosphate + an unfolded polypeptide.. In terms of biological role, together with its co-chaperonin GroES, plays an essential role in assisting protein folding. The GroEL-GroES system forms a nano-cage that allows encapsulation of the non-native substrate proteins and provides a physical environment optimized to promote and accelerate protein folding. This Chelativorans sp. (strain BNC1) protein is Chaperonin GroEL 2.